A 90-amino-acid chain; its full sequence is NELL2-interacting cell ontogeny regulator 1 (90 aa).

A signal peptide spans 1–28; the sequence is MAPALRSLLSPRTLLLLLLSLALLGARA.

This sequence belongs to the NICOL family. Interacts with NELL2; triggers epididymal differentiation. Interacts with cell surface receptor TFRC; the interaction mediates uptake of NICOL1 into fibroblasts. As to expression, expression is enriched in both male and female reproductive organs, including the testis, epididymis, seminal vesicles, coagulating glands, ovary and uterus, and in various non-reproductive organs such as brain, thymus and liver. In testis, expressed in both germ cells and Sertoli cells. Also expressed at low levels in the kidney. Expressed during neocortex and cerebellum development.

It localises to the secreted. The protein localises to the cytoplasm. It is found in the perinuclear region. Its function is as follows. mRNA-binding protein which interacts with a range of target mRNAs including SERPINE1, ACTA2, CCN2 and COL4A1 and may promote extracellular matrix production. Binds to the 3'-UTR of SERPINE1 mRNA and stabilizes the mRNA, possibly by competing for binding with SERBP1 and preventing SERBP1-mediated mRNA degradation. Also binds to the 3'-UTR of ACTA2. Testis-derived lumicrine factor that triggers epididymal differentiation and sperm maturation. The polypeptide is NELL2-interacting cell ontogeny regulator 1 (Mus musculus (Mouse)).